The primary structure comprises 260 residues: UPF0246 protein Bcep18194_A5551 (260 aa).

The protein belongs to the UPF0246 family.

The sequence is that of UPF0246 protein Bcep18194_A5551 from Burkholderia lata (strain ATCC 17760 / DSM 23089 / LMG 22485 / NCIMB 9086 / R18194 / 383).